Consider the following 307-residue polypeptide: Actin maturation protease (307 aa).

Residues 1 to 34 form a disordered region; the sequence is MSLENDAAAPPPPPLPPPPPPQPPSLARSESSKK. Over residues 9 to 24 the composition is skewed to pro residues; it reads APPPPPLPPPPPPQPP. Residues 80–200 are peptidase C39-like; it reads SLIQDGPQCG…WAVASGILLG (121 aa). The active site involves Cys88.

The protein belongs to the ACTMAP family.

The protein localises to the cytoplasm. The enzyme catalyses N-terminal N(alpha)-acetyl-L-methionyl-L-aspartyl-[protein] + H2O = N-terminal L-aspartyl-[protein] + N-acetyl-L-methionine. The catalysed reaction is N-terminal N(alpha)-acetyl-L-methionyl-L-glutamyl-[protein] + H2O = N-terminal L-glutamyl-[protein] + N-acetyl-L-methionine. It catalyses the reaction N-terminal N(alpha)-acetyl-L-cysteinyl-L-aspartyl-[protein] + H2O = N-terminal L-aspartyl-[protein] + N-acetyl-L-cysteine. It carries out the reaction N-terminal N(alpha)-acetyl-L-cysteinyl-L-glutamyl-[protein] + H2O = N-terminal L-glutamyl-[protein] + N-acetyl-L-cysteine. Actin maturation protease that specifically mediates the cleavage of immature acetylated N-terminal actin, thereby contributing to actin maturation. Cleaves N-terminal acetylated methionine of immature cytoplasmic actin after translation. Cleaves N-terminal acetylated cysteine of muscle actin after canonical removal of N-terminal methionine. This chain is Actin maturation protease, found in Danio rerio (Zebrafish).